The following is a 370-amino-acid chain: Cyanuric acid amidohydrolase (370 aa).

The segment at 1–106 is RU A; it reads MRTTSVGVFK…TVFTRREVER (106 aa). Residues Arg-54 and 85-86 contribute to the substrate site; that span reads SG. The tract at residues 115 to 251 is RU B; it reads RLSIGMAHTR…NVVIVLGNSA (137 aa). Lys-165 is a catalytic residue. Substrate-binding positions include Arg-197 and 234 to 235; that span reads SA. Ser-234 functions as the Nucleophile in the catalytic mechanism. An RU C region spans residues 257–370; sequence FEIGHAVMND…PVAVIARLSD (114 aa). Glu-302 serves as a coordination point for Mg(2+). Residues Arg-329 and 348–349 each bind substrate; that span reads SG. Positions 351, 354, 355, 356, and 359 each coordinate Mg(2+).

It belongs to the cyclic amide hydrolase (CyAH) family. As to quaternary structure, homotetramer.

The catalysed reaction is cyanurate + H2O = 1-carboxybiuret + H(+). The protein operates within xenobiotic degradation; atrazine degradation; biuret from cyanurate: step 1/1. Its activity is regulated as follows. Inhibited by barbituric acid. Responsible for the hydrolysis of cyanuric acid, an intermediate formed during catabolism of s-triazine based compounds in herbicides such as atrazine and polymers such as melamine. Catalyzes the hydrolytic opening of the s-triazine ring of cyanuric acid (2,4,6-trihydroxy-s-triazine) to yield carbon dioxide and carboxybiuret, which spontaneously decarboxylates to biuret. The protein is Cyanuric acid amidohydrolase of Bradyrhizobium diazoefficiens (strain JCM 10833 / BCRC 13528 / IAM 13628 / NBRC 14792 / USDA 110).